Consider the following 494-residue polypeptide: Maintenance of mitochondrial morphology protein 1 (494 aa).

Residues M1–G25 lie on the Lumenal side of the membrane. A helical membrane pass occupies residues F26 to F46. Residues G47–N494 are Cytoplasmic-facing. Disordered stretches follow at residues P53–S99, P278–V330, and R395–N494. Basic residues predominate over residues L57–S67. 2 stretches are compositionally biased toward polar residues: residues N68 to R81 and S88 to S99. The region spanning Q134–P387 is the SMP-LTD domain. Over residues P278–P290 the composition is skewed to pro residues. Composition is skewed to polar residues over residues T300–E318 and T406–A415. Over residues R425–R437 the composition is skewed to basic and acidic residues.

Belongs to the MMM1 family. As to quaternary structure, homodimer. Component of the ER-mitochondria encounter structure (ERMES) or MDM complex, composed of mmm1, mdm10, mdm12 and mdm34. A mmm1 homodimer associates with one molecule of mdm12 on each side in a pairwise head-to-tail manner, and the SMP-LTD domains of mmm1 and mdm12 generate a continuous hydrophobic tunnel for phospholipid trafficking.

The protein localises to the endoplasmic reticulum membrane. Its function is as follows. Component of the ERMES/MDM complex, which serves as a molecular tether to connect the endoplasmic reticulum (ER) and mitochondria. Components of this complex are involved in the control of mitochondrial shape and protein biogenesis, and function in nonvesicular lipid trafficking between the ER and mitochondria. The mdm12-mmm1 subcomplex functions in the major beta-barrel assembly pathway that is responsible for biogenesis of all outer membrane beta-barrel proteins, and acts in a late step after the SAM complex. The mdm10-mdm12-mmm1 subcomplex further acts in the TOM40-specific pathway after the action of the mdm12-mmm1 complex. Essential for establishing and maintaining the structure of mitochondria and maintenance of mtDNA nucleoids. The chain is Maintenance of mitochondrial morphology protein 1 from Aspergillus oryzae (strain ATCC 42149 / RIB 40) (Yellow koji mold).